The sequence spans 381 residues: E3 ubiquitin-protein ligase RNF133 (381 aa).

One can recognise a PA domain in the interval 65-167; the sequence is SSILKRVAGV…VKGMEILHLI (103 aa). The helical transmembrane segment at 186 to 208 threads the bilayer; it reads WLNHYFVSFMIVTTATLAYFTFY. The RING-type; atypical zinc-finger motif lies at 256-297; it reads CVICFEAYKPNEIVRILTCKHFFHKNCIDPWILAHGTCPMCK. The segment at 340 to 381 is disordered; that stretch reads LPPARTSSKVTHVQEHPTSVNVGSQPPEAEETGHPSFGQHDL. Residues 344-363 show a composition bias toward polar residues; that stretch reads RTSSKVTHVQEHPTSVNVGS.

Interacts with E3 ligase UBE2J1. Auto-ubiquitinated.

The protein resides in the endoplasmic reticulum membrane. It catalyses the reaction S-ubiquitinyl-[E2 ubiquitin-conjugating enzyme]-L-cysteine + [acceptor protein]-L-lysine = [E2 ubiquitin-conjugating enzyme]-L-cysteine + N(6)-ubiquitinyl-[acceptor protein]-L-lysine.. It participates in protein modification; protein ubiquitination. Its function is as follows. Has E3 ubiquitin-protein ligase activity. Plays a role in male fecundity through the interaction with the E2 ubituitin-protein ligase UBE2J1. The protein is E3 ubiquitin-protein ligase RNF133 (Rnf133) of Rattus norvegicus (Rat).